Consider the following 115-residue polypeptide: Insulin-like peptide IlO1_i1 (115 aa).

Residues 1–20 (MFVYTTIMLLLLAEINHSQG) form the signal peptide. 3 cysteine pairs are disulfide-bonded: cysteine 40-cysteine 101, cysteine 52-cysteine 114, and cysteine 100-cysteine 105. Residues 59–93 (RRNRITGLDQRSIFESNLLAKRFLISRRQIVNNRR) constitute a propeptide, c peptide.

It belongs to the insulin family. In terms of tissue distribution, expressed in tentacles.

The protein resides in the secreted. In terms of biological role, heterodimer with unknown function. Surprisingly, the truncated synthetic analog (dimer of 27-58 and 94-115) does not bind to long insulin receptor (HIR-B) and insulin-like growth factor 1 receptor. This truncated synthetic analog shows very weak inhibitory activity on different voltage-gated channels. The sequence is that of Insulin-like peptide IlO1_i1 from Oulactis sp. (Sea anemone).